Reading from the N-terminus, the 89-residue chain is Acylphosphatase (89 aa).

The region spanning 3–89 (ALEIYVSGNV…ENYESFEVAY (87 aa)) is the Acylphosphatase-like domain. Active-site residues include R18 and N36.

The protein belongs to the acylphosphatase family.

It catalyses the reaction an acyl phosphate + H2O = a carboxylate + phosphate + H(+). The sequence is that of Acylphosphatase (acyP) from Archaeoglobus fulgidus (strain ATCC 49558 / DSM 4304 / JCM 9628 / NBRC 100126 / VC-16).